A 101-amino-acid polypeptide reads, in one-letter code: MISLGHLLALGAVLFCISLAGIFLNRKNVIVLLMSIELMLLAVNVNFIAFSRQLGDTAGQLFVFFILTVAAAEAAIGLAILVTLFRTHHTINVAEVDALKG.

3 consecutive transmembrane segments (helical) span residues 4–24, 30–50, and 62–82; these read LGHL…GIFL, IVLL…FIAF, and FVFF…AILV.

The protein belongs to the complex I subunit 4L family. In terms of assembly, NDH-1 is composed of 14 different subunits. Subunits NuoA, H, J, K, L, M, N constitute the membrane sector of the complex.

The protein resides in the cell inner membrane. The catalysed reaction is a quinone + NADH + 5 H(+)(in) = a quinol + NAD(+) + 4 H(+)(out). Functionally, NDH-1 shuttles electrons from NADH, via FMN and iron-sulfur (Fe-S) centers, to quinones in the respiratory chain. The immediate electron acceptor for the enzyme in this species is believed to be ubiquinone. Couples the redox reaction to proton translocation (for every two electrons transferred, four hydrogen ions are translocated across the cytoplasmic membrane), and thus conserves the redox energy in a proton gradient. The protein is NADH-quinone oxidoreductase subunit K of Xylella fastidiosa (strain Temecula1 / ATCC 700964).